The sequence spans 693 residues: Elongation factor G (693 aa).

Residues 8–283 enclose the tr-type G domain; the sequence is NRIRNIGIAA…AVIDYLPAPT (276 aa). Residues 17–24, 81–85, and 135–138 contribute to the GTP site; these read AHIDAGKT, DTPGH, and NKMD.

Belongs to the TRAFAC class translation factor GTPase superfamily. Classic translation factor GTPase family. EF-G/EF-2 subfamily.

It localises to the cytoplasm. Functionally, catalyzes the GTP-dependent ribosomal translocation step during translation elongation. During this step, the ribosome changes from the pre-translocational (PRE) to the post-translocational (POST) state as the newly formed A-site-bound peptidyl-tRNA and P-site-bound deacylated tRNA move to the P and E sites, respectively. Catalyzes the coordinated movement of the two tRNA molecules, the mRNA and conformational changes in the ribosome. The protein is Elongation factor G of Wolinella succinogenes (strain ATCC 29543 / DSM 1740 / CCUG 13145 / JCM 31913 / LMG 7466 / NCTC 11488 / FDC 602W) (Vibrio succinogenes).